We begin with the raw amino-acid sequence, 216 residues long: Glycerol uptake facilitator protein-like 6 (216 aa).

A run of 2 helical transmembrane segments spans residues 5–25 (LAEF…VVIA) and 30–50 (LAIG…FGGI). The NPA 1 motif lies at 56–58 (NPA). 3 helical membrane passes run 72–92 (ADAI…SAAV), 114–134 (IGSG…LMVI), and 147–167 (FAGL…LNLT). The NPA 2 motif lies at 172 to 174 (NPA). A helical membrane pass occupies residues 191–213 (LWVYILAPEVGAILAAFCARVMG).

The protein belongs to the MIP/aquaporin (TC 1.A.8) family.

The protein localises to the cell membrane. Probable transporter that facilitates the transmembrane diffusion of an unknown substrate. Is not permeable to water, dihydroxyacetone, glycerol, urea, H(2)O(2) and D/L-lactic acid. The polypeptide is Glycerol uptake facilitator protein-like 6 (Lactiplantibacillus plantarum (strain ATCC BAA-793 / NCIMB 8826 / WCFS1) (Lactobacillus plantarum)).